Reading from the N-terminus, the 398-residue chain is Na(+)/H(+) antiporter NhaA (398 aa).

Helical transmembrane passes span 19–39 (IGGI…NSPG), 64–84 (LLLW…GLEL), 99–119 (IILP…IYLA), 130–150 (GWAI…SLLG), 159–179 (ILLT…IACF), 182–202 (NDIY…LFIV), 222–242 (IAML…AMFI), 266–286 (ATFI…LTNI), 299–319 (IALG…WVGV), 337–357 (GMSA…SLAF), and 370–390 (LGII…LNKT).

It belongs to the NhaA Na(+)/H(+) (TC 2.A.33) antiporter family.

The protein resides in the cell inner membrane. It carries out the reaction Na(+)(in) + 2 H(+)(out) = Na(+)(out) + 2 H(+)(in). Functionally, na(+)/H(+) antiporter that extrudes sodium in exchange for external protons. The protein is Na(+)/H(+) antiporter NhaA of Desulfotalea psychrophila (strain LSv54 / DSM 12343).